Here is an 819-residue protein sequence, read N- to C-terminus: Leucine--tRNA ligase (819 aa).

Positions 42–52 (PYPSGRLHMGH) match the 'HIGH' region motif. The short motif at 577 to 581 (KMSKS) is the 'KMSKS' region element. ATP is bound at residue Lys-580.

It belongs to the class-I aminoacyl-tRNA synthetase family.

It is found in the cytoplasm. It catalyses the reaction tRNA(Leu) + L-leucine + ATP = L-leucyl-tRNA(Leu) + AMP + diphosphate. In Saccharophagus degradans (strain 2-40 / ATCC 43961 / DSM 17024), this protein is Leucine--tRNA ligase.